Here is a 201-residue protein sequence, read N- to C-terminus: Adenylyl-sulfate kinase (201 aa).

Residue 35-42 (GLSGSGKS) coordinates ATP. Ser109 acts as the Phosphoserine intermediate in catalysis.

This sequence belongs to the APS kinase family.

It catalyses the reaction adenosine 5'-phosphosulfate + ATP = 3'-phosphoadenylyl sulfate + ADP + H(+). Its pathway is sulfur metabolism; hydrogen sulfide biosynthesis; sulfite from sulfate: step 2/3. In terms of biological role, catalyzes the synthesis of activated sulfate. In Klebsiella pneumoniae (strain 342), this protein is Adenylyl-sulfate kinase.